A 132-amino-acid chain; its full sequence is Agouti-signaling protein (132 aa).

Positions 1 to 22 are cleaved as a signal peptide; it reads MDVTRLVLATLLVFLCFFAAYS. Residue asparagine 39 is glycosylated (N-linked (GlcNAc...) asparagine). The interval 60–93 is disordered; the sequence is KKISRKEAEKRRSSKKEASKQKVARPRTPLSVPC. The span at 64 to 79 shows a compositional bias: basic and acidic residues; that stretch reads RKEAEKRRSSKKEASK. 5 disulfide bridges follow: cysteine 93-cysteine 108, cysteine 100-cysteine 114, cysteine 107-cysteine 125, cysteine 111-cysteine 132, and cysteine 116-cysteine 123. Residues 93-132 form the Agouti domain; sequence CVSTRGSCKPPAPACCHPCASCQCRFFRSACSCRVLNVNC.

It is found in the secreted. Involved in the regulation of melanogenesis. The binding of ASP to MC1R precludes alpha-MSH initiated signaling and thus blocks production of cAMP, leading to a down-regulation of eumelanogenesis (brown/black pigment) and thus increasing synthesis of pheomelanin (yellow/red pigment). The protein is Agouti-signaling protein (ASIP) of Cebuella pygmaea (Pygmy marmoset).